We begin with the raw amino-acid sequence, 104 residues long: Cysteine-rich and transmembrane domain-containing protein 1 (104 aa).

2 stretches are compositionally biased toward pro residues: residues 1–25 (MNPENPPPYPGPGPTAPYPPYPQQP) and 33–47 (GAPPPQGYPYPPPQG). Positions 1-47 (MNPENPPPYPGPGPTAPYPPYPQQPMGPMGPMGAPPPQGYPYPPPQG) are disordered. The chain crosses the membrane as a helical span at residues 81 to 98 (LGPSTCLTACWTALCCCC).

It belongs to the CYSTM1 family.

It is found in the membrane. This Mus musculus (Mouse) protein is Cysteine-rich and transmembrane domain-containing protein 1 (Cystm1).